Consider the following 76-residue polypeptide: Large ribosomal subunit protein uL29 (76 aa).

It belongs to the universal ribosomal protein uL29 family.

In Corynebacterium aurimucosum (strain ATCC 700975 / DSM 44827 / CIP 107346 / CN-1) (Corynebacterium nigricans), this protein is Large ribosomal subunit protein uL29.